Consider the following 366-residue polypeptide: Ribosomal RNA large subunit methyltransferase M (366 aa).

S-adenosyl-L-methionine is bound by residues Ser-188, 221-224 (CPGG), Asp-240, Asp-260, and Asp-277. Lys-306 acts as the Proton acceptor in catalysis.

It belongs to the class I-like SAM-binding methyltransferase superfamily. RNA methyltransferase RlmE family. RlmM subfamily. Monomer.

It is found in the cytoplasm. The enzyme catalyses cytidine(2498) in 23S rRNA + S-adenosyl-L-methionine = 2'-O-methylcytidine(2498) in 23S rRNA + S-adenosyl-L-homocysteine + H(+). Functionally, catalyzes the 2'-O-methylation at nucleotide C2498 in 23S rRNA. This Salmonella newport (strain SL254) protein is Ribosomal RNA large subunit methyltransferase M.